A 687-amino-acid chain; its full sequence is Adhesion G-protein coupled receptor G1 (687 aa).

A signal peptide spans 1–25 (MTAQSLLQMTLFLLSLLFLVQGAHG). 26-33 (RGHREDFR) contacts heparin. Residues 26-402 (RGHREDFRFC…VEVDAVHKHY (377 aa)) are Extracellular-facing. Intrachain disulfides connect C35-C91 and C121-C177. 3 N-linked (GlcNAc...) asparagine glycosylation sites follow: N39, N148, and N171. Heparin is bound at residue 190 to 200 (LKHPQKASRRP). The GAIN-B domain maps to 224–395 (DTVSFEEDRI…AVLMVSSVEV (172 aa)). N234, N303, N324, and N341 each carry an N-linked (GlcNAc...) asparagine glycan. Intrachain disulfides connect C346/C377 and C366/C379. The interval 346 to 395 (CVFWVEDPTLSSPGHWSSAGCETVRRETQTSCFCNHLTYFAVLMVSSVEV) is GPS. Residues 384–397 (YFAVLMVSSVEVDA) are stachel. The helical transmembrane segment at 403–423 (LSLLSYVGCVISALACVVTIA) threads the bilayer. The Cytoplasmic portion of the chain corresponds to 424-442 (AYLCSRRKPRDYTIKVHMN). Residues 443–463 (LLLAVFLLDMSFLLSEPVALT) traverse the membrane as a helical segment. The Extracellular portion of the chain corresponds to 464–470 (GSEAGCR). A helical membrane pass occupies residues 471–491 (AGAIFLHFSLLACLSWMGLEG). At 492 to 512 (YNLYRLVVEVFGTYVPGYLLK) the chain is on the cytoplasmic side. Residues 513 to 533 (LSAMGWGFPIFLVTLVALVDV) traverse the membrane as a helical segment. The Extracellular portion of the chain corresponds to 534–570 (DNYGPIILAVHRTPESVIYPSMCWIRDSLVSYVTNLG). The helical transmembrane segment at 571–591 (LFSLVFLFNMAMLGTMVVQIL) threads the bilayer. Residues 592–603 (RLRPHTQKWSHV) are Cytoplasmic-facing. Residues 604–624 (LTLLGLSLVLGLPWALIFFSF) traverse the membrane as a helical segment. Residues 625-630 (ASGTFQ) lie on the Extracellular side of the membrane. The chain crosses the membrane as a helical span at residues 631-651 (LVVLYLFSIITSFQGFLIFIW). At 652–687 (YWSMRLQARGGPSPLKSNSDSARLPISSGSTSSSRI) the chain is on the cytoplasmic side. The segment at 664-687 (SPLKSNSDSARLPISSGSTSSSRI) is disordered. Residues 678–687 (SSGSTSSSRI) are compositionally biased toward low complexity.

It belongs to the G-protein coupled receptor 2 family. LN-TM7 subfamily. Heterodimer of 2 chains generated by proteolytic processing; the large extracellular N-terminal fragment (ADGRG1 NT) and the membrane-bound C-terminal fragment (ADGRG1-CT) predominantly remain associated and non-covalently linked. ADGRG1 NT self-associates in a trans-trans manner; the homophilic interaction enhances receptor signaling. Interacts with TGM2. Interacts with heparin; leading to the reduction of ADGRG1 shedding. Interacts with COL3A1. Part of a GPCR-tetraspanin complex at least consisting of ADGRG1, CD81, eventually CD9, and GNA11 in which CD81 is enhancing the association of ADGRG1 with GNA11. Post-translationally, autoproteolytically cleaved into 2 fragments; the large extracellular N-terminal fragment (ADGRG1 NT) and the membrane-bound C-terminal fragment (ADGRG1 CT) predominantly remain associated and non-covalently linked. Shedding to yield the secreted ADGRG1 N-terminal fragment seems to involve metalloprotease(s). Ubiquitinated. Undergoes polyubiquitination upon activation.

Its subcellular location is the cell membrane. It localises to the secreted. The protein localises to the membrane raft. With respect to regulation, forms a heterodimer of 2 chains generated by proteolytic processing that remain associated through non-covalent interactions mediated by the GAIN-B domain. In the inactivated receptor, the Stachel sequence (also named stalk) is embedded in the GAIN-B domain, where it adopts a beta-strand conformation. On activation, the Stachel moves into the 7 transmembrane region and adopts a twisted hook-shaped configuration that forms contacts within the receptor, leading to coupling of a G-alpha protein, which activates signaling. The cleaved GAIN-B and N-terminal domains can then dissociate from the rest of the receptor. Its function is as follows. Adhesion G-protein coupled receptor (aGPCR) for steroid hormone 17alpha-hydroxypregnenolone (17-OH), which is involved in cell adhesion and cell-cell interactions. Ligand binding causes a conformation change that triggers signaling via guanine nucleotide-binding proteins (G proteins) and modulates the activity of downstream effectors, such as RhoA pathway. ADGRG1 is coupled to G(12) and/or G(13) G proteins (GNA12 and GNA13, respectively) and mediates the activation Rho small GTPases. Acts as a potent suppressor of ferroptosis: binding to 17-OH-binding initiates signaling that down-regulates CD36 and alleviates ferroptosis-induced liver injury. Ligand-binding also induces cell adhesion activity via association with proteins such as collagen III/COL3A1 and TGM2. Mediates cell matrix adhesion in developing neurons and hematopoietic stem cells. Involved in cortical development, specifically in maintenance of the pial basement membrane integrity and in cortical lamination: association with COL3A1 in the developing brain inhibits neuronal migration via activation of the RhoA pathway. Together with TGM2, acts as a regulator of myelination and myelin repair in oligodendrocyte precursor cells. Acts as a hemostatic sensor of shear force: G protein-coupled receptor signaling is activated in response to shear force in platelets, promoting G(13) G protein signaling, and platelet shape change and aggregation in a COL3A1-dependent manner. Acts as an inhibitor of VEGFA production thereby inhibiting angiogenesis through a signaling pathway mediated by PRKCA. Plays a role in the maintenance of hematopoietic stem cells in bone marrow niche. Plays an essential role in testis development. This chain is Adhesion G-protein coupled receptor G1 (ADGRG1), found in Pongo pygmaeus (Bornean orangutan).